Here is a 474-residue protein sequence, read N- to C-terminus: Ribulose bisphosphate carboxylase/oxygenase activase, chloroplastic (474 aa).

Residues Met-1–Leu-58 constitute a chloroplast transit peptide. At Thr-78 the chain carries Phosphothreonine; by CK2. Gly-165–Ser-172 contacts ATP. Position 283 is a phosphothreonine (Thr-283).

The protein belongs to the RuBisCO activase family. Phosphorylated at Thr-78 by CK2.

The protein resides in the plastid. The protein localises to the chloroplast stroma. Its subcellular location is the chloroplast. It is found in the plastoglobule. Functionally, activation of RuBisCO (ribulose-1,5-bisphosphate carboxylase/oxygenase; EC 4.1.1.39) involves the ATP-dependent carboxylation of the epsilon-amino group of lysine leading to a carbamate structure. The chain is Ribulose bisphosphate carboxylase/oxygenase activase, chloroplastic (RCA) from Arabidopsis thaliana (Mouse-ear cress).